The chain runs to 764 residues: Protective antigen (764 aa).

Positions 1-29 (MKKRKVLIPLMALSTILVSSTGNLEVIQA) are cleaved as a signal peptide. The tract at residues 30–287 (EVKQENRLLN…PEARHPLVAA (258 aa)) is domain 1, calcium-binding; LF and EF binding sites. Positions 43–179 (SSSQGLLGYY…NKKEVISSDN (137 aa)) constitute a PA14 domain. The tract at residues 176 to 214 (SSDNLQLPELKQKSSNSRKKRSTSAGPTVPDRDNDGIPD) is disordered. The Ca(2+) site is built by Asp206, Asp208, Asp210, Ile212, and Glu217. Positions 231 to 239 (FLSPWISNI) are alpha-clamp. Ca(2+)-binding residues include Ser251, Lys254, and Asp264. The segment at 288–516 (YPIVHVDMEN…SEVLPQIQET (229 aa)) is domain 2, membrane insertion and heptamerization. The disordered stretch occupies residues 302-333 (KNEDQSTQNTDSQTRTISKNTSTSRTHTSEVH). A compositionally biased stretch (polar residues) spans 306-327 (QSTQNTDSQTRTISKNTSTSRT). A run of 2 beta stranded transmembrane segments spans residues 331–342 (EVHGNAEVHASF) and 345–354 (IGGSVSAGFS). The tract at residues 517 to 624 (TARIIFNGKD…KMNILIRDKR (108 aa)) is domain 3, heptamerization. Residues 625-764 (FHYDRNNIAV…IFSKKGYEIG (140 aa)) form a domain 4, binding to the receptor region.

It belongs to the bacterial binary toxin family. Interacts with host ANTXR1 and ANTXR2. In terms of assembly, homooligomer; homooligomerizes to form homoheptamers (PA-63(7)) or homooctamers (PA-63(8)). PA-63(7) or PA-63(8) form ring-shaped oligomers that are in a pre-pore conformation, which do not penetrate the host membrane. PA-63(8) displays an enhanced stability, suggesting that this form circulates in the blood to reach and exert toxicity even in distant tissues. Interacts with lethal factor (LF) and edema factor (EF); can bind LF and EF simultaneously and interaction takes place following homooligomerization on the host cell membrane. PA-63(7) homoheptamer interacts with three molecules of LF to form the PA(7)LF(3) complex, in which the relative position of the N-terminal alpha-helices in the three LFs determines which factor is translocated first. In terms of processing, proteolytic activation by FURIN cleaves the protein in two parts, PA-20 and PA-63; the latter is the mature protein. The cleavage occurs at the cell surface and probably in the serum of infected animals as well; both native and cleaved PA are able to bind to the cell receptor. The release of PA-20 from the remaining receptor-bound PA-63 exposes the binding site for EF and LF, and promotes oligomerization and internalization of the protein.

The protein resides in the secreted. It is found in the host cell membrane. The protein localises to the host endosome membrane. Its function is as follows. Protective antigen constitutes one of the three proteins composing the anthrax toxin; it mediates attachment to host cells and translocation of edema factor (EF) and lethal factor (LF) into the host cytoplasm. PA associated with LF forms the lethal toxin (LeTx) and causes death when injected; PA associated with EF forms the edema toxin (EdTx) and produces edema. PA induces immunity to infection with anthrax. Functionally, mediates the attachment to host cells by binding host cell receptors ANTXR1 and ANTXR2. Following host cell surface attachment, PA is cleaved by FURIN to generate the PA-63 (Protective antigen PA-63) form, which constitutes the mature form of the protein that oligomerizes and forms a pore to translocate the enzymatic toxin components edema factor (EF) and lethal factor (LF) into the host cytosol. In terms of biological role, mature form that oligomerizes and forms a pore to translocate the enzymatic toxin components edema factor (EF) and lethal factor (LF) into the host cytosol. Following attachment to host cell receptors and cleavage by FURIN, homooligomerizes to form ring-shaped oligomers that are in a pre-pore conformation, and associates with EF and LF. Toxin-leaded complexes are then endocytosed in a clathrin-dependent process, followed by a conformational change of oligomerized PA-63 from the pre-pore to pore state, which is triggered by the low pH in the endosome. Once active, the pore mediates unfolding of EF and LF, which pass through the pore and translocate into the host cytosol. The polypeptide is Protective antigen (pagA) (Bacillus anthracis).